Here is a 333-residue protein sequence, read N- to C-terminus: Protein pelota homolog (333 aa).

This sequence belongs to the eukaryotic release factor 1 family. Pelota subfamily. In terms of assembly, monomer. Requires a divalent metal cation as cofactor.

The protein resides in the cytoplasm. Its function is as follows. May function in recognizing stalled ribosomes, interact with stem-loop structures in stalled mRNA molecules, and effect endonucleolytic cleavage of the mRNA. May play a role in the release non-functional ribosomes and degradation of damaged mRNAs. Has endoribonuclease activity. This Pyrobaculum arsenaticum (strain DSM 13514 / JCM 11321 / PZ6) protein is Protein pelota homolog.